The chain runs to 359 residues: 3-dehydroquinate synthase (359 aa).

Residues 72-77 (EGEIHK), 106-110 (GVIGD), 130-131 (TS), K143, K152, and 170-173 (CLKT) contribute to the NAD(+) site. Positions 185, 248, and 264 each coordinate Zn(2+).

It belongs to the sugar phosphate cyclases superfamily. Dehydroquinate synthase family. Requires Co(2+) as cofactor. Zn(2+) is required as a cofactor. It depends on NAD(+) as a cofactor.

The protein resides in the cytoplasm. It carries out the reaction 7-phospho-2-dehydro-3-deoxy-D-arabino-heptonate = 3-dehydroquinate + phosphate. The protein operates within metabolic intermediate biosynthesis; chorismate biosynthesis; chorismate from D-erythrose 4-phosphate and phosphoenolpyruvate: step 2/7. In terms of biological role, catalyzes the conversion of 3-deoxy-D-arabino-heptulosonate 7-phosphate (DAHP) to dehydroquinate (DHQ). In Dehalococcoides mccartyi (strain ATCC BAA-2100 / JCM 16839 / KCTC 5957 / BAV1), this protein is 3-dehydroquinate synthase.